The following is a 246-amino-acid chain: Probable transcriptional regulatory protein Dshi_2762 (246 aa).

It belongs to the TACO1 family.

It is found in the cytoplasm. This chain is Probable transcriptional regulatory protein Dshi_2762, found in Dinoroseobacter shibae (strain DSM 16493 / NCIMB 14021 / DFL 12).